Here is a 367-residue protein sequence, read N- to C-terminus: tRNA N6-adenosine threonylcarbamoyltransferase (367 aa).

H123 and H127 together coordinate Fe cation. Substrate contacts are provided by residues 145–149 (LVSGG), D178, G191, and N288. Position 316 (D316) interacts with Fe cation.

It belongs to the KAE1 / TsaD family. It depends on Fe(2+) as a cofactor.

It is found in the cytoplasm. The catalysed reaction is L-threonylcarbamoyladenylate + adenosine(37) in tRNA = N(6)-L-threonylcarbamoyladenosine(37) in tRNA + AMP + H(+). Its function is as follows. Required for the formation of a threonylcarbamoyl group on adenosine at position 37 (t(6)A37) in tRNAs that read codons beginning with adenine. Is involved in the transfer of the threonylcarbamoyl moiety of threonylcarbamoyl-AMP (TC-AMP) to the N6 group of A37, together with TsaE and TsaB. TsaD likely plays a direct catalytic role in this reaction. The polypeptide is tRNA N6-adenosine threonylcarbamoyltransferase (Caulobacter vibrioides (strain ATCC 19089 / CIP 103742 / CB 15) (Caulobacter crescentus)).